A 423-amino-acid polypeptide reads, in one-letter code: Gamma-glutamyl phosphate reductase (423 aa).

Residues M1–Q14 show a composition bias toward low complexity. The interval M1–D25 is disordered. Over residues R15 to D25 the composition is skewed to basic and acidic residues.

The protein belongs to the gamma-glutamyl phosphate reductase family.

Its subcellular location is the cytoplasm. The enzyme catalyses L-glutamate 5-semialdehyde + phosphate + NADP(+) = L-glutamyl 5-phosphate + NADPH + H(+). The protein operates within amino-acid biosynthesis; L-proline biosynthesis; L-glutamate 5-semialdehyde from L-glutamate: step 2/2. In terms of biological role, catalyzes the NADPH-dependent reduction of L-glutamate 5-phosphate into L-glutamate 5-semialdehyde and phosphate. The product spontaneously undergoes cyclization to form 1-pyrroline-5-carboxylate. The chain is Gamma-glutamyl phosphate reductase from Mycobacterium ulcerans (strain Agy99).